The following is a 576-amino-acid chain: Coilin (576 aa).

Phosphoserine is present on serine 105. Phosphothreonine is present on threonine 122. Disordered regions lie at residues 125 to 330 (DCKY…CLMS) and 352 to 389 (RPGP…SLPA). Glycyl lysine isopeptide (Lys-Gly) (interchain with G-Cter in SUMO2) cross-links involve residues lysine 127, lysine 151, and lysine 160. The residue at position 184 (serine 184) is a Phosphoserine; by VRK1 and VRK2. Glycyl lysine isopeptide (Lys-Gly) (interchain with G-Cter in SUMO2) cross-links involve residues lysine 204 and lysine 209. The segment covering 214–225 (QRCSSPKGSARN) has biased composition (polar residues). Residues 223 to 226 (ARNS) form a 1-1 repeat. Residues 223–271 (ARNSLVKAKRKGSVSVCSKESPSSSSESESCDESISDGPSKVTLEARNS) form a 2 X 4 AA repeats of A-R-N-S region. The segment covering 235-250 (SVSVCSKESPSSSSES) has biased composition (low complexity). Phosphoserine is present on residues serine 248, serine 250, serine 256, serine 271, and serine 272. A 1-2 repeat occupies 268-271 (ARNS). Residues 270–285 (NSSEKLPTELSKEEPS) are compositionally biased toward basic and acidic residues. Residues lysine 274 and lysine 281 each participate in a glycyl lysine isopeptide (Lys-Gly) (interchain with G-Cter in SUMO2) cross-link. A Phosphothreonine modification is found at threonine 290. Residues lysine 293 and lysine 297 each participate in a glycyl lysine isopeptide (Lys-Gly) (interchain with G-Cter in SUMO2) cross-link. Serine 301 bears the Phosphoserine mark. A compositionally biased stretch (low complexity) spans 301–320 (SLTPSKGKTSGTTSSSSDSS). The residue at position 303 (threonine 303) is a Phosphothreonine. Residues 386–389 (SLPA) form a 2-1 repeat. The tract at residues 386–520 (SLPASLGRGW…DIEILSSLPA (135 aa)) is 2 X 4 AA repeats of S-L-P-A. The segment at 392–420 (GRGWGREENLFSWKGAKGRGMRGRGRGRG) is required for interaction with SMN. Serine 403 is modified (phosphoserine). 4 consecutive repeat copies span residues 413–414 (RG), 415–416 (RG), 417–418 (RG), and 419–420 (RG). The 4 X 2 AA tandem repeats of R-G stretch occupies residues 413–420 (RGRGRGRG). Residue lysine 444 forms a Glycyl lysine isopeptide (Lys-Gly) (interchain with G-Cter in SUMO2) linkage. A Phosphothreonine modification is found at threonine 456. Residues 460 to 559 (DYSLLPLLAA…ITVFWKELID (100 aa)) form the Tudor; atypical domain. Serine 487 and serine 489 each carry phosphoserine. Residue lysine 496 forms a Glycyl lysine isopeptide (Lys-Gly) (interchain with G-Cter in SUMO2) linkage. The stretch at 517 to 520 (SLPA) is one 2-2 repeat. The residue at position 566 (serine 566) is a Phosphoserine.

It belongs to the coilin family. In terms of assembly, interacts with ANKS1B. Interacts with SMN1 (via Tudor domain). Interacts (via C-terminus) with AK6. Interacts with WRAP53/TCAB1. Interacts with HMBOX1. Interacts with PSME3; the interaction is inhibited by PSME3IP1. Interacts wit UBL5. In terms of processing, symmetrical dimethylation of arginine residues within the RG repeat region enhances affinity for SMN, and thus localization of SMN complexes to CBs. Post-translationally, phosphorylated by VRK1. Phosphorylation during mitosis is associated with disassembly of CBs. Found in all the cell types examined.

The protein localises to the nucleus. It localises to the cajal body. Functionally, component of nuclear coiled bodies, also known as Cajal bodies or CBs, which are involved in the modification and assembly of nucleoplasmic snRNPs. This chain is Coilin (COIL), found in Homo sapiens (Human).